The chain runs to 450 residues: MSLMQFSGLLVVWLLSTLFIATLTWFEFRRVRFNFNVFFSLLFLLTFFFGFPLTSVLVFRFDVGVAPPEILLQALLSAACFYAVYYVTYKTRLRKRVTDVPRKPLFTMNRVETHLTWVMLMGIALVSVGIFFMHNGFLLFRLHSYSQIFSSEVSGVALKRFFYFFIPAMLVIYFLRQDSKAWLFFLVSTVAFGLLTYMIVGGTRANIIIAFAIFLFIGIIRGWISLWMLVAAGVLGIVGMFWLALKRYGLNVSGDEAFYTFLYLTRDTFSPWENLALLLQNYDNIDFQGLAPIVRDFYVFIPSWLWPGRPGIVLNSANYFTWEVLNNHSGLAISPTLIGSLVVMGGALFIPLGAVAVGLIIKWFDWLYELGNRETNRYKAAILHSFCFGAIFNMIVLAREGLDSFVSRVVFFLVIFGACLLVAKLLFWLFDCAGLVHQRAKPQPQTQVEG.

Helical transmembrane passes span 6–26, 37–57, 63–83, 120–140, 155–175, 181–201, 207–227, 228–248, 341–361, 378–398, and 410–430; these read FSGL…LTWF, VFFS…TSVL, VGVA…CFYA, LMGI…FLLF, GVAL…IYFL, AWLF…MIVG, IIIA…ISLW, MLVA…LKRY, LVVM…GLII, YKAA…IVLA, and VFFL…FWLF.

The protein belongs to the WzyE family. Probably part of a complex composed of WzxE, WzyE and WzzE.

The protein resides in the cell inner membrane. Its pathway is bacterial outer membrane biogenesis; enterobacterial common antigen biosynthesis. In terms of biological role, probably involved in the polymerization of enterobacterial common antigen (ECA) trisaccharide repeat units. The chain is Probable ECA polymerase from Citrobacter koseri (strain ATCC BAA-895 / CDC 4225-83 / SGSC4696).